We begin with the raw amino-acid sequence, 451 residues long: POC1 centriolar protein homolog B (451 aa).

7 WD repeats span residues 16-55 (GHKA…RAYR), 58-99 (GHKD…SEFK), 101-139 (HTAP…FLYS), 142-181 (RHTH…CVNN), 183-223 (SDSV…LLQH), 226-265 (VHSG…LIYT), and 268-307 (GHTG…LHCK). The residue at position 321 (serine 321) is a Phosphoserine. Residues 372 to 394 (PECSPTTTKKKTEDMSDLPSESQ) form a disordered region. Residues 404–443 (ALEHIMEQLNVLTQTVSILEQRLTLTEDKLKDCLENQQKL) adopt a coiled-coil conformation.

Belongs to the WD repeat POC1 family. As to quaternary structure, interacts with POC1A. Interacts with FAM161A. Interacts with CEP44; the interaction is direct and recruits POC1B to centriolar microtubules. Forms a microtubule-associated complex with POC5, CETN2 and FAM161A. Interacts with CCDC15. Phosphorylated in mitotic cells that may be mediated by CDK1.

Its subcellular location is the cytoplasm. It localises to the cytoskeleton. It is found in the microtubule organizing center. The protein resides in the centrosome. The protein localises to the centriole. Its subcellular location is the cilium basal body. It localises to the spindle pole. Its function is as follows. Plays an important role in centriole assembly and/or stability and ciliogenesis. Involved in early steps of centriole duplication, as well as in the later steps of centriole length control. Acts in concert with POC1A to ensure centriole integrity and proper mitotic spindle formation. Required for primary cilia formation, ciliary length and also cell proliferation. Required for retinal integrity. Acts as a positive regulator of centriole elongation. The sequence is that of POC1 centriolar protein homolog B (POC1B) from Pongo abelii (Sumatran orangutan).